A 516-amino-acid chain; its full sequence is uncharacterized protein (516 aa).

2 PFTB repeats span residues 45 to 86 and 401 to 443; these read RQDA…QRAD and DERA…DGSE.

This is an uncharacterized protein from Sinorhizobium fredii (strain NBRC 101917 / NGR234).